Consider the following 410-residue polypeptide: Arginine biosynthesis bifunctional protein ArgJ (410 aa).

Residues Thr-158, Lys-184, Thr-195, Glu-282, Asn-405, and Thr-410 each contribute to the substrate site. The active-site Nucleophile is the Thr-195.

Belongs to the ArgJ family. Heterotetramer of two alpha and two beta chains.

Its subcellular location is the cytoplasm. It carries out the reaction N(2)-acetyl-L-ornithine + L-glutamate = N-acetyl-L-glutamate + L-ornithine. It catalyses the reaction L-glutamate + acetyl-CoA = N-acetyl-L-glutamate + CoA + H(+). Its pathway is amino-acid biosynthesis; L-arginine biosynthesis; L-ornithine and N-acetyl-L-glutamate from L-glutamate and N(2)-acetyl-L-ornithine (cyclic): step 1/1. The protein operates within amino-acid biosynthesis; L-arginine biosynthesis; N(2)-acetyl-L-ornithine from L-glutamate: step 1/4. In terms of biological role, catalyzes two activities which are involved in the cyclic version of arginine biosynthesis: the synthesis of N-acetylglutamate from glutamate and acetyl-CoA as the acetyl donor, and of ornithine by transacetylation between N(2)-acetylornithine and glutamate. The polypeptide is Arginine biosynthesis bifunctional protein ArgJ (Rhodopirellula baltica (strain DSM 10527 / NCIMB 13988 / SH1)).